The chain runs to 243 residues: Transmembrane protein 176A (243 aa).

At Ser-42 the chain carries Phosphoserine. A run of 4 helical transmembrane segments spans residues 65–85, 92–112, 122–142, and 204–224; these read WVVQ…LYIC, TQGA…VAFL, ALMR…AIVI, and LLGV…VYLW.

It belongs to the TMEM176 family. In terms of assembly, interacts with MCOLN2.

It is found in the membrane. In Rattus norvegicus (Rat), this protein is Transmembrane protein 176A (Tmem176a).